Reading from the N-terminus, the 159-residue chain is Transcription elongation factor GreA (159 aa).

A coiled-coil region spans residues 5-77 (REVVLTAQGL…LETMLRKAVI (73 aa)).

It belongs to the GreA/GreB family.

Functionally, necessary for efficient RNA polymerase transcription elongation past template-encoded arresting sites. The arresting sites in DNA have the property of trapping a certain fraction of elongating RNA polymerases that pass through, resulting in locked ternary complexes. Cleavage of the nascent transcript by cleavage factors such as GreA or GreB allows the resumption of elongation from the new 3'terminus. GreA releases sequences of 2 to 3 nucleotides. The protein is Transcription elongation factor GreA of Alkaliphilus oremlandii (strain OhILAs) (Clostridium oremlandii (strain OhILAs)).